We begin with the raw amino-acid sequence, 315 residues long: Voltage-dependent calcium channel gamma-3 subunit (315 aa).

Transmembrane regions (helical) follow at residues 8-28 (IQML…TIAV), 104-124 (SSVF…CVAA), 135-155 (ILSA…GIIV), and 181-201 (FGAF…HIYI). A Phosphoserine modification is found at Ser248.

The protein belongs to the PMP-22/EMP/MP20 family. CACNG subfamily. As to quaternary structure, the L-type calcium channel is composed of five subunits: alpha-1, alpha-2/delta, beta and gamma. Acts as an auxiliary subunit for AMPA-selective glutamate receptors (AMPARs). Found in a complex with GRIA1, GRIA2, GRIA3, GRIA4, CNIH2, CNIH3, CACNG2, CACNG4, CACNG5, CACNG7 and CACNG8. Interacts with AP4M1 and GRIA1; associates GRIA1 with the adaptor protein complex 4 (AP-4) to target GRIA1 to the somatodendritic compartment of neurons.

The protein resides in the membrane. Its function is as follows. Regulates the trafficking to the somatodendritic compartment and gating properties of AMPA-selective glutamate receptors (AMPARs). Promotes their targeting to the cell membrane and synapses and modulates their gating properties by slowing their rates of activation, deactivation and desensitization. Does not show subunit-specific AMPA receptor regulation and regulates all AMPAR subunits. Thought to stabilize the calcium channel in an inactivated (closed) state. In Homo sapiens (Human), this protein is Voltage-dependent calcium channel gamma-3 subunit (CACNG3).